The primary structure comprises 1020 residues: DNA-directed RNA polymerase 2, chloroplastic/mitochondrial (1020 aa).

The segment at 314–336 (KKQKAEKDKQKEDGEHVTQEQEK) is disordered. Catalysis depends on residues D721, K796, and D953.

This sequence belongs to the phage and mitochondrial RNA polymerase family. The highest levels of expression are detected in the mature leaves. The level of expression is lowest in the cotyledons.

The protein localises to the plastid. It localises to the chloroplast. Its subcellular location is the mitochondrion. The enzyme catalyses RNA(n) + a ribonucleoside 5'-triphosphate = RNA(n+1) + diphosphate. In terms of biological role, DNA-dependent RNA polymerase catalyzes the transcription of DNA into RNA using the four ribonucleoside triphosphates as substrates. In Nicotiana sylvestris (Wood tobacco), this protein is DNA-directed RNA polymerase 2, chloroplastic/mitochondrial (RPOT2).